A 351-amino-acid polypeptide reads, in one-letter code: Lipoyl synthase (351 aa).

The segment covering 1–10 has biased composition (polar residues); the sequence is MNDSGNSSKV. The segment at 1-27 is disordered; it reads MNDSGNSSKVNVRPPSAGLGAPSPGKR. Positions 14-24 are enriched in low complexity; that stretch reads PPSAGLGAPSP. [4Fe-4S] cluster-binding residues include Cys-74, Cys-79, Cys-85, Cys-100, Cys-104, Cys-107, and Ser-311. Positions 86-300 constitute a Radical SAM core domain; it reads WEDREATFLI…KEQAKEIGFS (215 aa).

The protein belongs to the radical SAM superfamily. Lipoyl synthase family. [4Fe-4S] cluster serves as cofactor.

It localises to the cytoplasm. The catalysed reaction is [[Fe-S] cluster scaffold protein carrying a second [4Fe-4S](2+) cluster] + N(6)-octanoyl-L-lysyl-[protein] + 2 oxidized [2Fe-2S]-[ferredoxin] + 2 S-adenosyl-L-methionine + 4 H(+) = [[Fe-S] cluster scaffold protein] + N(6)-[(R)-dihydrolipoyl]-L-lysyl-[protein] + 4 Fe(3+) + 2 hydrogen sulfide + 2 5'-deoxyadenosine + 2 L-methionine + 2 reduced [2Fe-2S]-[ferredoxin]. It functions in the pathway protein modification; protein lipoylation via endogenous pathway; protein N(6)-(lipoyl)lysine from octanoyl-[acyl-carrier-protein]: step 2/2. Catalyzes the radical-mediated insertion of two sulfur atoms into the C-6 and C-8 positions of the octanoyl moiety bound to the lipoyl domains of lipoate-dependent enzymes, thereby converting the octanoylated domains into lipoylated derivatives. This chain is Lipoyl synthase, found in Tropheryma whipplei (strain TW08/27) (Whipple's bacillus).